The chain runs to 232 residues: 5'-methylthioadenosine/S-adenosylhomocysteine nucleosidase (232 aa).

Catalysis depends on E12, which acts as the Proton acceptor. Substrate is bound by residues G78, I152, and 173-174 (ME). The Proton donor role is filled by D197.

This sequence belongs to the PNP/UDP phosphorylase family. MtnN subfamily. Homodimer.

It catalyses the reaction S-adenosyl-L-homocysteine + H2O = S-(5-deoxy-D-ribos-5-yl)-L-homocysteine + adenine. The enzyme catalyses S-methyl-5'-thioadenosine + H2O = 5-(methylsulfanyl)-D-ribose + adenine. The catalysed reaction is 5'-deoxyadenosine + H2O = 5-deoxy-D-ribose + adenine. The protein operates within amino-acid biosynthesis; L-methionine biosynthesis via salvage pathway; S-methyl-5-thio-alpha-D-ribose 1-phosphate from S-methyl-5'-thioadenosine (hydrolase route): step 1/2. Its function is as follows. Catalyzes the irreversible cleavage of the glycosidic bond in both 5'-methylthioadenosine (MTA) and S-adenosylhomocysteine (SAH/AdoHcy) to adenine and the corresponding thioribose, 5'-methylthioribose and S-ribosylhomocysteine, respectively. Also cleaves 5'-deoxyadenosine, a toxic by-product of radical S-adenosylmethionine (SAM) enzymes, into 5-deoxyribose and adenine. Thus, is required for in vivo function of the radical SAM enzymes biotin synthase and lipoic acid synthase, that are inhibited by 5'-deoxyadenosine accumulation. This is 5'-methylthioadenosine/S-adenosylhomocysteine nucleosidase from Edwardsiella ictaluri (strain 93-146).